Reading from the N-terminus, the 362-residue chain is Phospho-N-acetylmuramoyl-pentapeptide-transferase (362 aa).

The next 10 helical transmembrane spans lie at 28–48, 72–92, 94–114, 131–151, 169–189, 200–220, 236–256, 264–284, 290–310, and 339–359; these read IISF…VITW, TPTM…MVCA, LSNI…ILGL, VLHK…IIFM, FMPQ…VGTS, GLAI…AWIS, FSGE…GFLW, IFMG…IAVL, LLLI…LQVI, and IIVR…ITLK.

The protein belongs to the glycosyltransferase 4 family. MraY subfamily. The cofactor is Mg(2+).

Its subcellular location is the cell inner membrane. It carries out the reaction UDP-N-acetyl-alpha-D-muramoyl-L-alanyl-gamma-D-glutamyl-meso-2,6-diaminopimeloyl-D-alanyl-D-alanine + di-trans,octa-cis-undecaprenyl phosphate = di-trans,octa-cis-undecaprenyl diphospho-N-acetyl-alpha-D-muramoyl-L-alanyl-D-glutamyl-meso-2,6-diaminopimeloyl-D-alanyl-D-alanine + UMP. It functions in the pathway cell wall biogenesis; peptidoglycan biosynthesis. In terms of biological role, catalyzes the initial step of the lipid cycle reactions in the biosynthesis of the cell wall peptidoglycan: transfers peptidoglycan precursor phospho-MurNAc-pentapeptide from UDP-MurNAc-pentapeptide onto the lipid carrier undecaprenyl phosphate, yielding undecaprenyl-pyrophosphoryl-MurNAc-pentapeptide, known as lipid I. The polypeptide is Phospho-N-acetylmuramoyl-pentapeptide-transferase (Blochmanniella pennsylvanica (strain BPEN)).